Here is a 930-residue protein sequence, read N- to C-terminus: Isoleucine--tRNA ligase (930 aa).

Positions 57–67 match the 'HIGH' region motif; it reads PYANGNIHVGH. L-isoleucyl-5'-AMP is bound at residue Glu554. The short motif at 595–599 is the 'KMSKS' region element; sequence KMSKS. Lys598 contributes to the ATP binding site. Zn(2+) is bound by residues Cys888, Cys891, Cys908, and Cys911.

The protein belongs to the class-I aminoacyl-tRNA synthetase family. IleS type 1 subfamily. Monomer. It depends on Zn(2+) as a cofactor.

The protein resides in the cytoplasm. The catalysed reaction is tRNA(Ile) + L-isoleucine + ATP = L-isoleucyl-tRNA(Ile) + AMP + diphosphate. Its function is as follows. Catalyzes the attachment of isoleucine to tRNA(Ile). As IleRS can inadvertently accommodate and process structurally similar amino acids such as valine, to avoid such errors it has two additional distinct tRNA(Ile)-dependent editing activities. One activity is designated as 'pretransfer' editing and involves the hydrolysis of activated Val-AMP. The other activity is designated 'posttransfer' editing and involves deacylation of mischarged Val-tRNA(Ile). The chain is Isoleucine--tRNA ligase from Streptococcus pneumoniae (strain Taiwan19F-14).